Reading from the N-terminus, the 557-residue chain is Membrane protein insertase YidC (557 aa).

The next 5 membrane-spanning stretches (helical) occupy residues 3-23, 363-383, 437-457, 476-496, and 507-527; these read IKRT…FDNW, FVGN…AVFF, LPVV…LASV, PYFI…KLNP, and MMFM…GLVL.

It belongs to the OXA1/ALB3/YidC family. Type 1 subfamily. Interacts with the Sec translocase complex via SecD. Specifically interacts with transmembrane segments of nascent integral membrane proteins during membrane integration.

The protein localises to the cell inner membrane. Functionally, required for the insertion and/or proper folding and/or complex formation of integral membrane proteins into the membrane. Involved in integration of membrane proteins that insert both dependently and independently of the Sec translocase complex, as well as at least some lipoproteins. Aids folding of multispanning membrane proteins. This Burkholderia thailandensis (strain ATCC 700388 / DSM 13276 / CCUG 48851 / CIP 106301 / E264) protein is Membrane protein insertase YidC.